A 440-amino-acid chain; its full sequence is MEELARESISLLGKSGLEGGTPSLSSMGAIFIMLKSALGAGLLNFPWAFNKVGGMHTAIMVELVSLIFLISGLVILGYASSLSKHSTYQGVVKDLCGPAIGKLCGICYIINLFMICVAFLRVVEDQLEKLCDSIHSNNTLYAMSEVSQSWYMDPRFAITVLCLVIILPLSIPKEISFQKYTSILGTLAACYLTVMIIIKYYVMEHPVLIKHEFSSNAASWASMFSVVPTICFGFQCHEACVTIYSSMKNKCLSNWAAVSVVSMLICLLIYSFTGIYGSLTFGEAVAADILMSYPGNDVAVIIARLLFTISIITIYPIILLLGRCVIQEAWLNHREKSLFVTLTYERCVRVVITVLWILVTLLIALFVPDISEVISVIGGISAFFIFIFPGLCLVCAVESEPMNTKAKSCLTAWGAISVVCGAFVFGQSTTIAVMEIIAKF.

Helical transmembrane passes span 29–49 (AIFIMLKSALGAGLLNFPWAF), 58–78 (AIMVELVSLIFLISGLVILGY), 100–120 (IGKLCGICYIINLFMICVAFL), 156–176 (FAITVLCLVIILPLSIPKEIS), 183–203 (ILGTLAACYLTVMIIIKYYVM), 223–243 (MFSVVPTICFGFQCHEACVTI), 255–275 (WAAVSVVSMLICLLIYSFTGI), 300–320 (VIIARLLFTISIITIYPIILL), 350–370 (VVITVLWILVTLLIALFVPDI), 373–393 (VISVIGGISAFFIFIFPGLCL), and 418–438 (VVCGAFVFGQSTTIAVMEIIA).

It belongs to the amino acid/polyamine transporter 2 family.

It is found in the membrane. Its function is as follows. Putative sodium-dependent amino acid/proton antiporter. The protein is Putative sodium-coupled neutral amino acid transporter 8 (slc38a8) of Xenopus tropicalis (Western clawed frog).